The chain runs to 280 residues: DegV domain-containing protein Mb2440c (280 aa).

The DegV domain occupies 3 to 274 (VVVVTDTSCR…AGAVGVCVDV (272 aa)). S89 contributes to the hexadecanoate binding site.

Functionally, may bind long-chain fatty acids, such as palmitate, and may play a role in lipid transport or fatty acid metabolism. The protein is DegV domain-containing protein Mb2440c of Mycobacterium bovis (strain ATCC BAA-935 / AF2122/97).